Reading from the N-terminus, the 1116-residue chain is Anillin (1116 aa).

2 stretches are compositionally biased toward basic and acidic residues: residues 1 to 25 (MDPF…KMAD) and 85 to 94 (KQPKTPELPK). 4 disordered regions span residues 1-188 (MDPF…PVGR), 205-257 (DLSH…PKDT), 304-363 (KPNE…KVAT), and 443-522 (NVWT…PRLV). The span at 101-119 (ASHQQLRATNQTPQVSLLS) shows a compositional bias: polar residues. The segment covering 120–133 (SDKELTASDVKDAS) has biased composition (basic and acidic residues). The interval 142–254 (LADQRRYWDN…QDTTSCSQRP (113 aa)) is interactions with myh9 and myh10. Low complexity predominate over residues 226 to 242 (SKESTTSSASASMNSHS). The tract at residues 255–418 (KDTTVNKAVC…LKQNDISSTA (164 aa)) is interaction with F-actin. 2 stretches are compositionally biased toward polar residues: residues 304–326 (KPNE…SSPQ) and 336–356 (YSYQ…VQTQ). Residues 416 to 443 (STASLAQQQKKEREKELAALRGRYDRRN) adopt a coiled-coil conformation. Positions 453–472 (QGTFPETSSNLPTSDVASCS) are enriched in polar residues. Positions 975–1099 (SVEDKGFLTM…WMQKLNQFLV (125 aa)) constitute a PH domain.

Interacts with and bundles F-actin. Interacts with the non-muscle myosin II heavy chains myh9 and myh10, and these interactions may be enhanced by the phosphorylation of myosin II regulatory light chain by mylk.

The protein resides in the nucleus. The protein localises to the cytoplasm. Its subcellular location is the cytoskeleton. It is found in the cell cortex. It localises to the cell projection. The protein resides in the bleb. Its function is as follows. Required for cytokinesis. Essential for the structural integrity of the cleavage furrow and for completion of cleavage furrow ingression. Plays a role in bleb assembly during metaphase and anaphase of mitosis. May play a significant role in podocyte cell migration. The sequence is that of Anillin (anln) from Xenopus laevis (African clawed frog).